Consider the following 40-residue polypeptide: Protamine-2 (40 aa).

A disordered region spans residues 1–40 (MPPRRKRVSSAPRRRRRTYRRTTAHKHQERPVHRRRRRRH).

Testis.

It localises to the nucleus. Its subcellular location is the chromosome. Its function is as follows. Protamines substitute for histones in the chromatin of sperm during the haploid phase of spermatogenesis. They compact sperm DNA into a highly condensed, stable and inactive complex. This is Protamine-2 (PBP2) from Bufo japonicus (Japanese common toad).